Consider the following 163-residue polypeptide: Small ribosomal subunit protein bS18c (163 aa).

Disordered regions lie at residues 1–52 (MYIS…IGPG) and 144–163 (NLRN…SSDC). Basic residues predominate over residues 7–48 (PFRKSKQPFRKSKQPFHKSKQPFRKFKQPFRKSKQPFRRRSR).

This sequence belongs to the bacterial ribosomal protein bS18 family. In terms of assembly, part of the 30S ribosomal subunit.

It localises to the plastid. The protein resides in the chloroplast. The protein is Small ribosomal subunit protein bS18c of Saccharum hybrid (Sugarcane).